Consider the following 336-residue polypeptide: MEVHEEQVSAPVTGDATAKYLLQYILSARGICHENALILALMRLETDASTLNTEWSIQQWVDKLNDYINAINVKLNLLGYKIIRINHGIGRNAVTLKAKQNFESFEDNTAIRAHNNDYAVLQSIVLPESNRFFVYVNLASTEETKLATRFNQNEIEFMKWAIEQFMISGETIVEGPALETSIIVKEVNRILVAATGDSNLAKWRKFSTFTVGSTNLFQFQELTATDIEDLLLRLCELKWFYRTQEGKFGIDLRCIAELEEYLTSMYNLNTCQNCHKLAIQGVRCGNESCREENEETGENSLSQIWHVDCFKHYITHVSKNCDRCGSSLITEGVYVI.

Residues 268 to 327 (LNTCQNCHKLAIQGVRCGNESCREENEETGENSLSQIWHVDCFKHYITHVSKNCDRCGSS) form an RING-type; atypical zinc finger.

This sequence belongs to the NSE1 family. Component of the Smc5-Smc6 complex which consists of KRE29, MMS21, NSE1, NSE3, NSE4, NSE5, SMC5 and SMC6. Interacts with SMC5 and SMC6. Interacts with NSE3.

The protein localises to the nucleus. It catalyses the reaction S-ubiquitinyl-[E2 ubiquitin-conjugating enzyme]-L-cysteine + [acceptor protein]-L-lysine = [E2 ubiquitin-conjugating enzyme]-L-cysteine + N(6)-ubiquitinyl-[acceptor protein]-L-lysine.. Acts in a DNA repair pathway for removal of UV-induced DNA damage that is distinct from classical nucleotide excision repair and in repair of ionizing radiation damage. Functions in homologous recombination repair of DNA double strand breaks and in recovery of stalled replication forks. This chain is Non-structural maintenance of chromosomes element 1 (NSE1), found in Saccharomyces cerevisiae (strain ATCC 204508 / S288c) (Baker's yeast).